Here is a 264-residue protein sequence, read N- to C-terminus: Ribonuclease H (264 aa).

The disordered stretch occupies residues 55–88 (GSRYSSSSGPYRRSTTSYGYSPYSSSSSNYSARH). A compositionally biased stretch (low complexity) spans 56–85 (SRYSSSSGPYRRSTTSYGYSPYSSSSSNYS). Position 97 is a phosphoserine (S97). One can recognise an RNase H type-1 domain in the interval 120 to 263 (CSDRQVVYAD…ADMLARRGAS (144 aa)). Positions 129, 171, 191, and 255 each coordinate Mg(2+).

It belongs to the RNase H family. Mg(2+) serves as cofactor.

It catalyses the reaction Endonucleolytic cleavage to 5'-phosphomonoester.. In terms of biological role, endonuclease that specifically degrades the RNA of RNA-DNA hybrids. The protein is Ribonuclease H (rnh1) of Schizosaccharomyces pombe (strain 972 / ATCC 24843) (Fission yeast).